The primary structure comprises 283 residues: Pantothenate synthetase 1 (283 aa).

Met30 to His37 contributes to the ATP binding site. His37 acts as the Proton donor in catalysis. (R)-pantoate is bound at residue Gln61. Gln61 provides a ligand contact to beta-alanine. An ATP-binding site is contributed by Gly147–Asp150. (R)-pantoate is bound at residue Gln153. Residues Val176 and Met184–Arg187 each bind ATP.

This sequence belongs to the pantothenate synthetase family. As to quaternary structure, homodimer.

It localises to the cytoplasm. It carries out the reaction (R)-pantoate + beta-alanine + ATP = (R)-pantothenate + AMP + diphosphate + H(+). The protein operates within cofactor biosynthesis; (R)-pantothenate biosynthesis; (R)-pantothenate from (R)-pantoate and beta-alanine: step 1/1. Its function is as follows. Catalyzes the condensation of pantoate with beta-alanine in an ATP-dependent reaction via a pantoyl-adenylate intermediate. This chain is Pantothenate synthetase 1, found in Bradyrhizobium diazoefficiens (strain JCM 10833 / BCRC 13528 / IAM 13628 / NBRC 14792 / USDA 110).